Here is an 802-residue protein sequence, read N- to C-terminus: Leucine--tRNA ligase (802 aa).

A 'HIGH' region motif is present at residues 40–51; that stretch reads PYPSGAGLHVGH. Residues 576 to 580 carry the 'KMSKS' region motif; sequence KMSKS. Lysine 579 provides a ligand contact to ATP.

Belongs to the class-I aminoacyl-tRNA synthetase family.

It localises to the cytoplasm. It catalyses the reaction tRNA(Leu) + L-leucine + ATP = L-leucyl-tRNA(Leu) + AMP + diphosphate. The polypeptide is Leucine--tRNA ligase (Bacillus cereus (strain ATCC 14579 / DSM 31 / CCUG 7414 / JCM 2152 / NBRC 15305 / NCIMB 9373 / NCTC 2599 / NRRL B-3711)).